A 505-amino-acid polypeptide reads, in one-letter code: Bile acid-sensitive ion channel (505 aa).

The segment at 1–30 is binds the plasma membrane and stabilizes the channel in the closed state; that stretch reads MEQTEKSKVYAENGLLEKIKLCLSKKPLPS. Over 1-61 the chain is Cytoplasmic; it reads MEQTEKSKVY…NIVQNRSKIR (61 aa). The chain crosses the membrane as a helical span at residues 62–82; that stretch reads RVLWLVVVLGSVSLVTWQIYI. The Extracellular segment spans residues 83-459; that stretch reads RLLNYFTWPT…GLFCGASLIT (377 aa). 6 disulfide bridges follow: C112/C207, C185/C192, C298/C377, C315/C373, C328/C350, and C330/C342. Residues N147, N163, N178, and N179 are each glycosylated (N-linked (GlcNAc...) asparagine). N306 carries an N-linked (GlcNAc...) asparagine glycan. 3 N-linked (GlcNAc...) asparagine glycosylation sites follow: N370, N405, and N421. The GAS motif; ion selectivity filter motif lies at 454-456; that stretch reads GAS. The helical transmembrane segment at 460-480 threads the bilayer; sequence IIEIIEYLFTNFYWICIFFLL. Residues 481-505 are Cytoplasmic-facing; it reads KISEMTQWTPPPQNHLGNKNRIEEC.

The protein belongs to the amiloride-sensitive sodium channel (TC 1.A.6) family. ASIC5 subfamily. In terms of assembly, forms homotrimeric channels. As to expression, detected in small intestine, duodenum and jejunum. Detected at very low levels in testis and rectum.

It localises to the apical cell membrane. The protein resides in the cell membrane. It catalyses the reaction Na(+)(in) = Na(+)(out). It carries out the reaction Li(+)(in) = Li(+)(out). The catalysed reaction is K(+)(in) = K(+)(out). The enzyme catalyses H(+)(in) = H(+)(out). Inhibited by the diuretic drug amiloride. In terms of biological role, forms bile acid-gated sodium channels and may play a role in bile acid-dependent absorption and secretion by epithelial cells of the bile ducts. Displays high selectivity for sodium ions but can also permit the permeation of other cations. The gating could be indirect and the consequence of alterations of the membrane environment of the channel by bile acids. As a sodium channel of type II unipolar brush cells of the vestibulocerebellum, controlling the electrical activity of these cells, could play a role in motor coordination and balance. The sequence is that of Bile acid-sensitive ion channel from Homo sapiens (Human).